The chain runs to 357 residues: Peptide chain release factor 1 (357 aa).

Glutamine 234 carries the N5-methylglutamine modification.

It belongs to the prokaryotic/mitochondrial release factor family. Methylated by PrmC. Methylation increases the termination efficiency of RF1.

It localises to the cytoplasm. Functionally, peptide chain release factor 1 directs the termination of translation in response to the peptide chain termination codons UAG and UAA. The protein is Peptide chain release factor 1 of Lactococcus lactis subsp. cremoris (strain SK11).